The sequence spans 191 residues: Probable molybdenum cofactor guanylyltransferase (191 aa).

Residues 6 to 8 (LAG), K18, D67, and D92 each bind GTP. D92 is a Mg(2+) binding site.

This sequence belongs to the MobA family. Mg(2+) is required as a cofactor.

It is found in the cytoplasm. It catalyses the reaction Mo-molybdopterin + GTP + H(+) = Mo-molybdopterin guanine dinucleotide + diphosphate. Its function is as follows. Transfers a GMP moiety from GTP to Mo-molybdopterin (Mo-MPT) cofactor (Moco or molybdenum cofactor) to form Mo-molybdopterin guanine dinucleotide (Mo-MGD) cofactor. This is Probable molybdenum cofactor guanylyltransferase from Thermococcus gammatolerans (strain DSM 15229 / JCM 11827 / EJ3).